We begin with the raw amino-acid sequence, 395 residues long: F-box/kelch-repeat protein At3g13680 (395 aa).

The region spanning 1-47 (MTTMGDLPGDLVEEILSRVPLTSLRAIRSTCQKWNSLSKSQICGRKA) is the F-box domain. 4 Kelch repeats span residues 154–202 (ILRI…SLKG), 210–256 (KKET…VSLA), 265–314 (VLYQ…FIDE), and 337–383 (IVYI…LVQL).

This chain is F-box/kelch-repeat protein At3g13680, found in Arabidopsis thaliana (Mouse-ear cress).